The following is a 121-amino-acid chain: Small ribosomal subunit protein uS10 (121 aa).

N-acetylserine is present on serine 2. Glycyl lysine isopeptide (Lys-Gly) (interchain with G-Cter in ubiquitin) cross-links involve residues lysine 6, lysine 8, lysine 21, lysine 32, and lysine 101.

The protein belongs to the universal ribosomal protein uS10 family. In terms of assembly, component of the small ribosomal subunit (SSU). Mature yeast ribosomes consist of a small (40S) and a large (60S) subunit. The 40S small subunit contains 1 molecule of ribosomal RNA (18S rRNA) and 33 different proteins (encoded by 57 genes). The large 60S subunit contains 3 rRNA molecules (25S, 5.8S and 5S rRNA) and 46 different proteins (encoded by 81 genes). In terms of processing, ubiquitinated at Lys-6 and Lys-8 by HEL2, to activate the ribosome quality control (RQC) pathway in response to stalled ribosomes. Post-translationally, N-terminally acetylated by acetyltransferase NatA. Also partially acetylated by NatC.

It localises to the cytoplasm. Functionally, component of the ribosome, a large ribonucleoprotein complex responsible for the synthesis of proteins in the cell. The small ribosomal subunit (SSU) binds messenger RNAs (mRNAs) and translates the encoded message by selecting cognate aminoacyl-transfer RNA (tRNA) molecules. The large subunit (LSU) contains the ribosomal catalytic site termed the peptidyl transferase center (PTC), which catalyzes the formation of peptide bonds, thereby polymerizing the amino acids delivered by tRNAs into a polypeptide chain. The nascent polypeptides leave the ribosome through a tunnel in the LSU and interact with protein factors that function in enzymatic processing, targeting, and the membrane insertion of nascent chains at the exit of the ribosomal tunnel. In Saccharomyces cerevisiae (strain ATCC 204508 / S288c) (Baker's yeast), this protein is Small ribosomal subunit protein uS10.